The chain runs to 718 residues: Zinc finger protein 39 (718 aa).

The KRAB domain maps to 59–130 (VSFEDVSVDF…EDVPKQSRAD (72 aa)). The C2H2-type 1 zinc-finger motif lies at 298–320 (FECSICKKTFCTKCELMKHKKIH). The C2H2-type 2; degenerate zinc-finger motif lies at 353-375 (HRCKQCEKCFHQKNQQNVHERVP). 11 C2H2-type zinc fingers span residues 409 to 431 (YGCNLCGKAFYRKSHLGRHQKIH), 437 to 459 (YGCEECKKTFYHKSSLTIHQRTH), 465 to 487 (YECKKCRKTFYCKSDLNVHHRTH), 493 to 515 (YECDECRKTFYSKSHLVIHQKVH), 521 to 543 (YECEECQKAFSRKSNLTVHQKTH), 549 to 571 (YECNVCGKTFHRQSHLNMHQGTH), 577 to 599 (YQCEECGKAFYQKSSLRRHQRNH), 605 to 627 (YACEECRKTFLHKSSLTVHQRSH), 633 to 655 (YSCEECRKTFYSKSHLTVHQRTH), 661 to 683 (YECKLCKKAFHQKSYLNRHQVTH), and 689 to 711 (FECQECRKTFYHKSSLTVHQRIH).

In terms of tissue distribution, predominantly in the spermatocytes and spermatids of testes.

The protein localises to the nucleus. In terms of biological role, a putative DNA-binding regulatory protein associated with meiosis in spermatogenesis. The chain is Zinc finger protein 39 (Zfp39) from Mus musculus (Mouse).